The following is a 206-amino-acid chain: Uridine kinase (206 aa).

Residue G9–T16 coordinates ATP.

Belongs to the uridine kinase family.

Its subcellular location is the cytoplasm. The enzyme catalyses uridine + ATP = UMP + ADP + H(+). It carries out the reaction cytidine + ATP = CMP + ADP + H(+). Its pathway is pyrimidine metabolism; CTP biosynthesis via salvage pathway; CTP from cytidine: step 1/3. It participates in pyrimidine metabolism; UMP biosynthesis via salvage pathway; UMP from uridine: step 1/1. The polypeptide is Uridine kinase (Borrelia turicatae (strain 91E135)).